We begin with the raw amino-acid sequence, 320 residues long: Bifunctional phosphoglucose/phosphomannose isomerase (320 aa).

The SIS domain maps to 20-153 (IAKDLTPYKG…NLLGVDKDEL (134 aa)). Glycine 37, serine 38, serine 80, serine 82, threonine 85, and arginine 132 together coordinate D-fructose 6-phosphate. Residue glutamate 204 is the Proton acceptor of the active site. The D-fructose 6-phosphate site is built by histidine 220 and lysine 313. The active-site Proton donor is the histidine 220. Residue lysine 313 is the Proton acceptor of the active site.

It belongs to the PGI/PMI family. In terms of assembly, homodimer.

It catalyses the reaction alpha-D-glucose 6-phosphate = beta-D-fructose 6-phosphate. The catalysed reaction is D-mannose 6-phosphate = D-fructose 6-phosphate. Dual specificity isomerase that catalyzes the isomerization of both glucose-6-phosphate and mannose-6-phosphate to fructose-6-phosphate. In Aquifex aeolicus (strain VF5), this protein is Bifunctional phosphoglucose/phosphomannose isomerase.